Reading from the N-terminus, the 173-residue chain is Adenine phosphoribosyltransferase (173 aa).

It belongs to the purine/pyrimidine phosphoribosyltransferase family. Homodimer.

The protein resides in the cytoplasm. It carries out the reaction AMP + diphosphate = 5-phospho-alpha-D-ribose 1-diphosphate + adenine. Its pathway is purine metabolism; AMP biosynthesis via salvage pathway; AMP from adenine: step 1/1. Functionally, catalyzes a salvage reaction resulting in the formation of AMP, that is energically less costly than de novo synthesis. In Thermoanaerobacter sp. (strain X514), this protein is Adenine phosphoribosyltransferase.